A 118-amino-acid chain; its full sequence is Large ribosomal subunit protein bL20 (118 aa).

Belongs to the bacterial ribosomal protein bL20 family.

In terms of biological role, binds directly to 23S ribosomal RNA and is necessary for the in vitro assembly process of the 50S ribosomal subunit. It is not involved in the protein synthesizing functions of that subunit. The sequence is that of Large ribosomal subunit protein bL20 from Francisella tularensis subsp. tularensis (strain WY96-3418).